A 494-amino-acid polypeptide reads, in one-letter code: Zinc metalloproteinase/disintegrin (494 aa).

The N-terminal stretch at 1-20 (MIQVLLVTICLAVFPFQGSS) is a signal peptide. A propeptide spanning residues 21–193 (KTLKSGNVND…KKASHLVATS (173 aa)) is cleaved from the precursor. The region spanning 201–396 (RYVQLVIVAD…HNPPCILNQA (196 aa)) is the Peptidase M12B domain. 3 cysteine pairs are disulfide-bonded: Cys-311/Cys-391, Cys-351/Cys-375, and Cys-353/Cys-358. His-336 provides a ligand contact to Zn(2+). Residue Glu-337 is part of the active site. Zn(2+) contacts are provided by His-340 and His-346. The propeptide occupies 410–431 (ELLQNSVNPCYDPVTCQPKEKE). Residues 417–478 (NPCYDPVTCQ…DCPRNPYKGE (62 aa)) form the Disintegrin domain. Intrachain disulfides connect Cys-433-Cys-442, Cys-438-Cys-463, Cys-439-Cys-468, and Cys-451-Cys-470. A Cell attachment site motif is present at residues 455 to 457 (RGD). Positions 482 to 494 (MEWPAPAKGSVLM) are excised as a propeptide.

It belongs to the venom metalloproteinase (M12B) family. P-II subfamily. P-IIa sub-subfamily. Monomer (disintegrin). In terms of tissue distribution, expressed by the venom gland.

Its subcellular location is the secreted. Impairs hemostasis in the envenomed animal. Its function is as follows. Inhibits ADP-induced platelet aggregation (IC(50)=168 nM). Inhibits alpha-5/beta-1 (ITGA5/ITGB1) integrin and induces the expression of a ligand-induced binding site epitope on beta-1 integrin subunit. Has a direct chemotactic stimulus on human neutrophils in vitro. The polypeptide is Zinc metalloproteinase/disintegrin (Echis ocellatus (Ocellated saw-scaled viper)).